The primary structure comprises 615 residues: MPIQVLPPQLANQIAAGEVVERPASVVKELVENSLDAGATRIDIDIERGGAKIIRIRDNGCGIKKDELALALARHATSKIASLDDLEAIISLGFRGEALASISSVSRLTLTSRTAEQQEAWQAYAEGRDMDVTVKPAAHPVGTTLEVLDLFYNTPARRKFLRTEKTEFNHIDEIIRRIALARFDVTINLSHNGKIVRQYRAVPEGGQKERRLGAICGTAFLEQALAIEWQHGDLTLRGWVADPNHTTPALAEIQYCYVNGRMMRDRLINHAIRQACEDKLGADQQPAFVLYLEIDPHQVDVNVHPAKHEVRFHQSRLVHDFIYQGVLSVLQQQLETPLPLDDEPQPAPRAIPENRVAAGRNHFAEPAAREPVAPRYTPAPASGSRPAAPWPNAQPGYQKQQGEVYRQLLQTPAPMQKPKAPEPQEPALAANSQSFGRVLTIVHSDCALLERDGNISLLALSVAERWLRQAQLTPGEAPVCAQPLLIPLRLKVSGEEKSALEKAQSALAELGIDFQSDAQHVTIRAVPLPLRQQNLQILIPELIGYLAKQSVFEPGNIAQWIARNLMSEHAQWSMAQAITLLADVERLCPQLVKTPPGGLLQSVDLHPAIKALKDE.

A disordered region spans residues 363-397 (FAEPAAREPVAPRYTPAPASGSRPAAPWPNAQPGY). Positions 364 to 391 (AEPAAREPVAPRYTPAPASGSRPAAPWP) are enriched in low complexity.

This sequence belongs to the DNA mismatch repair MutL/HexB family.

This protein is involved in the repair of mismatches in DNA. It is required for dam-dependent methyl-directed DNA mismatch repair. May act as a 'molecular matchmaker', a protein that promotes the formation of a stable complex between two or more DNA-binding proteins in an ATP-dependent manner without itself being part of a final effector complex. The chain is DNA mismatch repair protein MutL from Escherichia coli (strain ATCC 8739 / DSM 1576 / NBRC 3972 / NCIMB 8545 / WDCM 00012 / Crooks).